Consider the following 1166-residue polypeptide: Peroxisomal ATPase PEX6 (1166 aa).

The protein belongs to the AAA ATPase family. In terms of assembly, interacts with PEX1; forming the PEX1-PEX6 AAA ATPase complex, which is composed of a heterohexamer formed by a trimer of PEX1-PEX6 dimers.

It localises to the membrane. It catalyses the reaction ATP + H2O = ADP + phosphate + H(+). Component of the PEX1-PEX6 AAA ATPase complex involved in peroxisome biosynthesis. The complex acts as a protein dislocase complex that mediates the ATP-dependent extraction of the PEX5 receptor from peroxisomal membranes, an essential step for PEX5 recycling. Specifically recognizes PEX5 monoubiquitinated at 'Cys-6', and pulls it out of the peroxisome lumen through the PEX2-PEX10-PEX12 retrotranslocation channel. Extraction by the PEX1-PEX6 AAA ATPase complex is accompanied by unfolding of the TPR repeats and release of bound cargo from PEX5. This Komagataella phaffii (strain GS115 / ATCC 20864) (Yeast) protein is Peroxisomal ATPase PEX6.